A 218-amino-acid chain; its full sequence is Riboflavin synthase (218 aa).

Lumazine-binding repeat units lie at residues 1–97 (MFTG…LGGH) and 98–194 (LVSG…EKLI). 2,4-dihydroxypteridine-binding positions include 4-6 (GII), 48-50 (CLT), 62-67 (DLSLET), 101-103 (GHV), lysine 136, 145-147 (SLT), and 159-164 (TIVPHT).

As to quaternary structure, homotrimer.

It catalyses the reaction 2 6,7-dimethyl-8-(1-D-ribityl)lumazine + H(+) = 5-amino-6-(D-ribitylamino)uracil + riboflavin. The protein operates within cofactor biosynthesis; riboflavin biosynthesis; riboflavin from 2-hydroxy-3-oxobutyl phosphate and 5-amino-6-(D-ribitylamino)uracil: step 2/2. Catalyzes the dismutation of two molecules of 6,7-dimethyl-8-ribityllumazine, resulting in the formation of riboflavin and 5-amino-6-(D-ribitylamino)uracil. The chain is Riboflavin synthase (ribE) from Photobacterium leiognathi.